The sequence spans 548 residues: T-complex protein 1 subunit theta (548 aa).

Residues 527 to 548 form a disordered region; that stretch reads QATGGPKPRGPKAQDEDDDGMA.

The protein belongs to the TCP-1 chaperonin family. Heterooligomeric complex.

The protein localises to the cytoplasm. Molecular chaperone; assists the folding of proteins upon ATP hydrolysis. Known to play a role, in vitro, in the folding of actin and tubulin. Required for correct subcellular localization of pgl-1. This Caenorhabditis elegans protein is T-complex protein 1 subunit theta (cct-8).